Consider the following 161-residue polypeptide: S-ribosylhomocysteine lyase (161 aa).

Fe cation contacts are provided by His57, His61, and Cys127.

It belongs to the LuxS family. In terms of assembly, homodimer. Requires Fe cation as cofactor.

It carries out the reaction S-(5-deoxy-D-ribos-5-yl)-L-homocysteine = (S)-4,5-dihydroxypentane-2,3-dione + L-homocysteine. In terms of biological role, involved in the synthesis of autoinducer 2 (AI-2) which is secreted by bacteria and is used to communicate both the cell density and the metabolic potential of the environment. The regulation of gene expression in response to changes in cell density is called quorum sensing. Catalyzes the transformation of S-ribosylhomocysteine (RHC) to homocysteine (HC) and 4,5-dihydroxy-2,3-pentadione (DPD). The polypeptide is S-ribosylhomocysteine lyase (Streptococcus equi subsp. equi (strain 4047)).